Reading from the N-terminus, the 108-residue chain is MLLFCPGCGNGLIVEEGQRCHRFACNTCPYVHNITRKVTNRKYPKLKEVDDVLGGAAAWENVDSTAEPCPKCEHPRAYFMQLQTRSADEPMTTFYKCCNAQCGHRWRD.

Zn(2+) is bound by residues Cys-5, Cys-8, Cys-25, Cys-28, Cys-69, and Cys-72. The segment at 5-28 (CPGCGNGLIVEEGQRCHRFACNTC) adopts a C4-type zinc-finger fold. The segment at 65-107 (TAEPCPKCEHPRAYFMQLQTRSADEPMTTFYKCCNAQCGHRWR) adopts a TFIIS-type zinc-finger fold. Residues 88–89 (DE) carry the Hairpin motif. 2 residues coordinate Zn(2+): Cys-98 and Cys-102.

The protein belongs to the archaeal RpoM/eukaryotic RPA12/RPB9/RPC11 RNA polymerase family. As to quaternary structure, component of the RNA polymerase III complex consisting of 17 subunits: a ten-subunit horseshoe-shaped catalytic core composed of POLR3A/RPC1, POLR3B/RPC2, POLR1C/RPAC1, POLR1D/RPAC2, POLR3K/RPC10, POLR2E/RPABC1, POLR2F/RPABC2, POLR2H/RPABC3, POLR2K/RPABC4 and POLR2L/RPABC5; a mobile stalk composed of two subunits POLR3H/RPC8 and CRCP/RPC9, protruding from the core and functioning primarily in transcription initiation; and additional subunits homologous to general transcription factors of the RNA polymerase II machinery, POLR3C/RPC3-POLR3F/RPC6-POLR3G/RPC7 heterotrimer required for transcription initiation and POLR3D/RPC4-POLR3E/RPC5 heterodimer involved in both transcription initiation and termination.

It localises to the nucleus. Core component of RNA polymerase III (Pol III) which synthesizes small non-coding RNAs using the four ribonucleoside triphosphates as substrates. Can mediate Pol I proofreading of the nascent RNA transcript. Anchors into the Pol III active site to constantly monitor transcription fidelity, cleaves mis-incorporated 5'-ribonucleotides and restarts the transcription process. Once Pol III reaches the poly(dT) termination signal, can induce Pol III clamp opening and transcription termination. Pol III plays an important role in sensing and limiting infection by intracellular bacteria and DNA viruses. Acts as a nuclear and cytosolic DNA sensor involved in innate immune response. Can sense non-self dsDNA that serves as template for transcription into dsRNA. The non-self RNA polymerase III transcripts, such as Epstein-Barr virus-encoded RNAs (EBERs) induce type I interferon and NF-kappa-B through the RIG-I pathway. This Mus musculus (Mouse) protein is DNA-directed RNA polymerase III subunit RPC10.